Consider the following 434-residue polypeptide: Nicotinate phosphoribosyltransferase (434 aa).

His242 carries the phosphohistidine; by autocatalysis modification.

It belongs to the NAPRTase family. Transiently phosphorylated on a His residue during the reaction cycle. Phosphorylation strongly increases the affinity for substrates and increases the rate of nicotinate D-ribonucleotide production. Dephosphorylation regenerates the low-affinity form of the enzyme, leading to product release.

The enzyme catalyses nicotinate + 5-phospho-alpha-D-ribose 1-diphosphate + ATP + H2O = nicotinate beta-D-ribonucleotide + ADP + phosphate + diphosphate. The protein operates within cofactor biosynthesis; NAD(+) biosynthesis; nicotinate D-ribonucleotide from nicotinate: step 1/1. Functionally, catalyzes the synthesis of beta-nicotinate D-ribonucleotide from nicotinate and 5-phospho-D-ribose 1-phosphate at the expense of ATP. The chain is Nicotinate phosphoribosyltransferase from Nitrobacter hamburgensis (strain DSM 10229 / NCIMB 13809 / X14).